A 91-amino-acid polypeptide reads, in one-letter code: UPF0367 protein cce_2199 (91 aa).

Belongs to the UPF0367 family.

The sequence is that of UPF0367 protein cce_2199 from Crocosphaera subtropica (strain ATCC 51142 / BH68) (Cyanothece sp. (strain ATCC 51142)).